Consider the following 64-residue polypeptide: Conotoxin Im11.1 (64 aa).

The N-terminal stretch at 1–26 (MMFRLTSVSCFLLVIACLNLVVLTNA) is a signal peptide. 4 disulfides stabilise this stretch: C27-C41, C34-C46, C40-C50, and C45-C54. N57 bears the Asparagine amide mark. A propeptide spanning residues 61–64 (ATFQ) is cleaved from the precursor.

This sequence belongs to the conotoxin I2 superfamily. As to expression, expressed by the venom duct.

The protein localises to the secreted. This Conus imperialis (Imperial cone) protein is Conotoxin Im11.1.